We begin with the raw amino-acid sequence, 611 residues long: Probable methyltransferase PMT19 (611 aa).

At 1-15 (MNPSQQHLPKLCPKR) the chain is on the cytoplasmic side. The chain crosses the membrane as a helical; Signal-anchor for type II membrane protein span at residues 16-36 (LFLFFTPFLLFSLYYILTTIK). At 37-611 (TITISSQDRH…TILIVDNSIK (575 aa)) the chain is on the lumenal side. N-linked (GlcNAc...) asparagine glycosylation is found at N68, N97, N289, N408, N411, and N587.

Belongs to the methyltransferase superfamily.

It localises to the endoplasmic reticulum membrane. This is Probable methyltransferase PMT19 from Arabidopsis thaliana (Mouse-ear cress).